Here is a 305-residue protein sequence, read N- to C-terminus: Oxygen-dependent coproporphyrinogen-III oxidase (305 aa).

A substrate-binding site is contributed by Ser98. 2 residues coordinate a divalent metal cation: His102 and His112. Residue His112 is the Proton donor of the active site. Substrate is bound at residue 114-116 (NVR). 2 residues coordinate a divalent metal cation: His151 and His181. The interval 246-281 (YVEFNLVYDRGTLFGLQSGGRTESILMSMPPLARWE) is important for dimerization. 264 to 266 (GGR) lines the substrate pocket.

Belongs to the aerobic coproporphyrinogen-III oxidase family. In terms of assembly, homodimer. It depends on a divalent metal cation as a cofactor.

The protein localises to the cytoplasm. It carries out the reaction coproporphyrinogen III + O2 + 2 H(+) = protoporphyrinogen IX + 2 CO2 + 2 H2O. It participates in porphyrin-containing compound metabolism; protoporphyrin-IX biosynthesis; protoporphyrinogen-IX from coproporphyrinogen-III (O2 route): step 1/1. Functionally, involved in the heme biosynthesis. Catalyzes the aerobic oxidative decarboxylation of propionate groups of rings A and B of coproporphyrinogen-III to yield the vinyl groups in protoporphyrinogen-IX. This is Oxygen-dependent coproporphyrinogen-III oxidase from Vibrio atlanticus (strain LGP32) (Vibrio splendidus (strain Mel32)).